The chain runs to 371 residues: O-antigen chain mannosyltransferase C (371 aa).

Belongs to the glycosyltransferase group 1 family. Glycosyltransferase 4 subfamily.

The enzyme catalyses N-acetyl-alpha-D-glucosaminyl-di-trans,octa-cis-undecaprenyl diphosphate + GDP-alpha-D-mannose = alpha-D-mannosyl-(1-&gt;3)-N-acetyl-alpha-D-glucosaminyl-di-trans,octa-cis-undecaprenyl diphosphate + GDP + H(+). The protein operates within bacterial outer membrane biogenesis; LPS O-antigen biosynthesis. Its function is as follows. Mannosyltransferase involved in the biosynthesis of the repeat unit of the lipopolysaccharide (LPS) O-antigen region. Catalyzes the transfer of a single alpha-(1-&gt;3)-linked mannose residue to the acceptor N-acetyl-glucosaminyl-diphospho-undecaprenol during the synthesis of the adapter region. This chain is O-antigen chain mannosyltransferase C, found in Escherichia coli.